The sequence spans 493 residues: Cytoplasmic tRNA 2-thiolation protein 2 (493 aa).

Serine 489 is subject to Phosphoserine.

This sequence belongs to the CTU2/NCS2 family. As to quaternary structure, interacts with NCS6 and URM1. May act by forming a heterodimer with NCS6.

The protein localises to the cytoplasm. The protein operates within tRNA modification; 5-methoxycarbonylmethyl-2-thiouridine-tRNA biosynthesis. Plays a central role in 2-thiolation of mcm(5)S(2)U at tRNA wobble positions of tRNA(Lys), tRNA(Glu) and tRNA(Gln). May act by forming a heterodimer with NCS6 that ligates sulfur from thiocarboxylated URM1 onto the uridine of tRNAs at wobble position. Prior mcm(5) tRNA modification by the elongator complex is required for 2-thiolation. May also be involved in protein urmylation. The polypeptide is Cytoplasmic tRNA 2-thiolation protein 2 (Saccharomyces cerevisiae (strain YJM789) (Baker's yeast)).